Reading from the N-terminus, the 636-residue chain is Leucine-rich repeat and fibronectin type-III domain-containing protein 4 (636 aa).

A signal peptide spans 1-16 (MAPPLLLLLLASGAAA). Residues 17 to 48 (CPLPCVCQNLSESLSTLCAHRGLLFVPPNVDR) form the LRRNT domain. Residues 17-518 (CPLPCVCQNL…LQAHVLGGTL (502 aa)) are Extracellular-facing. N-linked (GlcNAc...) asparagine glycans are attached at residues N25 and N70. 7 LRR repeats span residues 49–70 (RTVE…DFRN), 73–94 (GLVD…SFGD), 97–118 (SLRS…SLRG), 121–142 (NLQH…AFDD), 146–169 (SLED…GSMP), 170–191 (ALHT…VFAQ), and 194–215 (QLSR…PLFS). The LRRCT domain maps to 234–280 (NPLHCNCELLWLRRLARPDDLETCASPPTLAGRYFWAVPEGEFSCEP). An Ig-like domain is found at 281 to 367 (PLIARHTQRL…GEATARVELR (87 aa)). C302 and C351 form a disulfide bridge. N324, N333, N376, and N440 each carry an N-linked (GlcNAc...) asparagine glycan. Positions 405–502 (SEPAVQVTEV…GCAHFSTLPA (98 aa)) constitute a Fibronectin type-III domain. The chain crosses the membrane as a helical span at residues 519–539 (TVAVGGVLVAALLVFTVALLV). The Cytoplasmic segment spans residues 540–636 (RGRGAGNGRL…SAERLEESVV (97 aa)). The interval 556 to 585 (VQSQTNGGTSPMPKSHPPRSPPPRPQRSCS) is disordered. Residues 569 to 580 (KSHPPRSPPPRP) show a composition bias toward pro residues. Residues S585 and S627 each carry the phosphoserine modification. Residues 633 to 636 (ESVV) carry the PDZ-binding motif.

Belongs to the LRFN family. In terms of assembly, can form heteromeric complexes with LRFN1, LRFN2, LRFN3 and LRFN5. Unable to form homophilic interactions across cell junctions. Interacts with DLG1, DLG2 and DLG3. Also interacts with DLG4. Glycosylated. Expressed in brain and testis. In the brain, weak, but broad expression in the cerebral cortex and diencephalic nuclei. Also detected in other parts of the central nervous system, including the olfactory bulb, pons, cerebellum, and medulla oblongata, as well as in the peripheral nervous system, such as the ganglia of cranial nerves and the dorsal root ganglion during gestation.

It localises to the membrane. Functionally, promotes neurite outgrowth in hippocampal neurons. May play a role in redistributing DLG4 to the cell periphery. The polypeptide is Leucine-rich repeat and fibronectin type-III domain-containing protein 4 (Lrfn4) (Mus musculus (Mouse)).